An 80-amino-acid chain; its full sequence is Defensin-like protein 44 (80 aa).

The signal sequence occupies residues 1–27 (MAITKTSVTLLLLIIMAASLSNFSVLA). 4 cysteine pairs are disulfide-bonded: Cys40-Cys79, Cys44-Cys67, Cys53-Cys77, and Cys57-Cys78.

It belongs to the DEFL family.

Its subcellular location is the secreted. The polypeptide is Defensin-like protein 44 (Arabidopsis thaliana (Mouse-ear cress)).